We begin with the raw amino-acid sequence, 200 residues long: dTDP-4-dehydrorhamnose 3,5-epimerase (200 aa).

Residues arginine 21, glutamate 26, 45-47 (QVN), and arginine 57 each bind substrate. The active-site Proton acceptor is histidine 60. Substrate contacts are provided by lysine 70 and histidine 116. Catalysis depends on tyrosine 129, which acts as the Proton donor. Substrate contacts are provided by glutamate 140 and lysine 165.

Belongs to the dTDP-4-dehydrorhamnose 3,5-epimerase family.

The enzyme catalyses dTDP-4-dehydro-6-deoxy-alpha-D-glucose = dTDP-4-dehydro-beta-L-rhamnose. It participates in carbohydrate biosynthesis; dTDP-L-rhamnose biosynthesis. Its pathway is antibiotic biosynthesis; streptomycin biosynthesis. In terms of biological role, involved in the biosynthesis of the dihydrostreptose moiety of streptomycin. Catalyzes the epimerization of the C3' and C5'positions of dTDP-6-deoxy-D-xylo-4-hexulose, forming dTDP-6-deoxy-L-lyxo-4-hexulose. This Streptomyces griseus protein is dTDP-4-dehydrorhamnose 3,5-epimerase.